The primary structure comprises 317 residues: MKSSPNQLSIFSYLLGICSLDTLLSPVGRKMDAISPLVILRMDNHISSFFSEFQPNGQAPISSTDKQVTPQVSHDGQVLEFAPPRRLKTEEIPNIVDDFRIAARNAIEAGFDGVEIHGANGYLIDQFMKDSVNDRTDAYGGGIENRCRFAAEVITAVAGEIGAHRLGVRLSPFADYMDCHDSDPEVLALRVIGLMNNLGVLYCHMIEPRMCVGAGEDGSKPVIAHGRLLPFRKAFRGTFMVNGGYDRDEGDKAVADGYADLVAYGRLFLANPDLPERFRRKAGLNKYDRSTFYTSDPVVGYTDYPFLDDQNSELATR.

26-28 serves as a coordination point for FMN; it reads PVG. Position 117 to 120 (117 to 120) interacts with substrate; the sequence is HGAN. Tyr-122 serves as the catalytic Proton donor. Arg-169 contributes to the FMN binding site. Residue Arg-209 participates in substrate binding. Residues Gly-244 and 265–266 contribute to the FMN site; that span reads GR.

Belongs to the NADH:flavin oxidoreductase/NADH oxidase family. FMN serves as cofactor.

Functionally, putative oxophytodienoate reductase that may be involved in the biosynthesis or metabolism of oxylipin signaling molecules. The sequence is that of Putative 12-oxophytodienoate reductase 10 (OPR10) from Oryza sativa subsp. japonica (Rice).